Here is a 199-residue protein sequence, read N- to C-terminus: Thymidine kinase (199 aa).

ATP is bound by residues 23 to 30 (GSMFSGKT) and 95 to 98 (DEAQ). Catalysis depends on E96, which acts as the Proton acceptor. Zn(2+)-binding residues include C152, C155, C184, and C187.

Belongs to the thymidine kinase family. In terms of assembly, homotetramer.

Its subcellular location is the cytoplasm. It carries out the reaction thymidine + ATP = dTMP + ADP + H(+). The protein is Thymidine kinase of Bacteroides thetaiotaomicron (strain ATCC 29148 / DSM 2079 / JCM 5827 / CCUG 10774 / NCTC 10582 / VPI-5482 / E50).